Here is a 484-residue protein sequence, read N- to C-terminus: Putative tyramine receptor 2 (484 aa).

Topologically, residues 1 to 54 (MVRVELQAASLMNGSSAAEEPQDALVGGDACGGRRPPSVLGVRLAVPEWEVAVT) are extracellular. A glycan (N-linked (GlcNAc...) asparagine) is linked at Asn-13. The chain crosses the membrane as a helical span at residues 55–77 (AVSLSLIILITIVGNVLVVLSVF). Over 78-87 (TYKPLRIVQN) the chain is Cytoplasmic. The helical transmembrane segment at 88 to 109 (FFIVSLAVADLTVAVLVMPFNV) threads the bilayer. At 110–126 (AYSLIQRWVFGIVVCKM) the chain is on the extracellular side. A disulfide bridge connects residues Cys-124 and Cys-203. A helical transmembrane segment spans residues 127–147 (WLTCDVLCCTASILNLCAIAL). The Cytoplasmic segment spans residues 148–167 (DRYWAITDPINYAQKRTLRR). A helical transmembrane segment spans residues 168–190 (VLAMIAGVWLLSGVISSPPLIGW). Residues 191-215 (NDWPMEFNDTTPCQLTEEQGYVIYS) are Extracellular-facing. Asn-198 carries N-linked (GlcNAc...) asparagine glycosylation. A helical membrane pass occupies residues 216–237 (SLGSFFIPLFIMTIVYVEIFIA). Topologically, residues 238–411 (TKRRLRERAK…LSKERRAART (174 aa)) are cytoplasmic. Polar residues predominate over residues 253–280 (SAMKQQMAAQAVPSSVPSHDQESVSSET). Disordered stretches follow at residues 253–322 (SAMK…PAMV) and 350–383 (TTTTTTTTTTTAVTDSPRSRTASQKGSTAPPTPV). A compositionally biased stretch (basic residues) spans 295-306 (EKRRKTKKKSKK). The span at 350–360 (TTTTTTTTTTT) shows a compositional bias: low complexity. Polar residues predominate over residues 361–378 (AVTDSPRSRTASQKGSTA). Residues 412-433 (LGIIMGVFVVCWLPFFLMYVIV) form a helical membrane-spanning segment. Residues 434–448 (PFCNPSCKPSPKLVN) lie on the Extracellular side of the membrane. A helical transmembrane segment spans residues 449–470 (FITWLGYINSALNPIIYTIFNL). The Cytoplasmic segment spans residues 471-484 (DFRRAFKKLLHFKT).

Belongs to the G-protein coupled receptor 1 family.

The protein resides in the cell membrane. Its function is as follows. G-protein coupled receptor for tyramine, a known neurotransmitter and neuromodulator and direct precursor of octopamine. The protein is Putative tyramine receptor 2 (GCR2) of Locusta migratoria (Migratory locust).